A 695-amino-acid polypeptide reads, in one-letter code: tRNA wybutosine-synthesizing protein 4 (695 aa).

Residues Lys38, Arg88, Gly115, 146–147 (DY), 196–197 (DL), and Glu224 each bind S-adenosyl-L-methionine. Catalysis depends on Arg88, which acts as the Proton donor; for both methylation and methoxycarbonylation activities. The active-site Proton acceptor; for methoxycarbonylation activity is Tyr229.

This sequence belongs to the methyltransferase superfamily. LCMT family.

The protein localises to the cytoplasm. It localises to the mitochondrion. The catalysed reaction is 7-[(3S)-3-amino-3-carboxypropyl]wyosine(37) in tRNA(Phe) + S-adenosyl-L-methionine = 7-[(3S)-(3-amino-3-methoxycarbonyl)propyl]wyosine(37) in tRNA(Phe) + S-adenosyl-L-homocysteine. It catalyses the reaction 7-[(3S)-(3-amino-3-methoxycarbonyl)propyl]wyosine(37) in tRNA(Phe) + S-adenosyl-L-methionine + CO2 = wybutosine(37) in tRNA(Phe) + S-adenosyl-L-homocysteine + 2 H(+). Its pathway is tRNA modification; wybutosine-tRNA(Phe) biosynthesis. In terms of biological role, S-adenosyl-L-methionine-dependent methyltransferase that acts as a component of the wybutosine biosynthesis pathway. Wybutosine is a hyper modified guanosine with a tricyclic base found at the 3'-position adjacent to the anticodon of eukaryotic phenylalanine tRNA. Catalyzes the final 2 independent reactions, methylation of the alpha-carboxy group of wybutosine-72 to form wybutosine-58, and methoxycarbonylation of alpha-amino group of wybutosine-58 through the fixation of CO(2) to complete wybutosine. This Saccharomyces cerevisiae (strain ATCC 204508 / S288c) (Baker's yeast) protein is tRNA wybutosine-synthesizing protein 4 (PPM2).